The sequence spans 207 residues: Guanylate kinase (207 aa).

Residues 3-181 (GLLFVVSAAS…ALHDLESVIT (179 aa)) enclose the Guanylate kinase-like domain. 10 to 17 (AASGTGKT) contributes to the ATP binding site.

Belongs to the guanylate kinase family.

It localises to the cytoplasm. It carries out the reaction GMP + ATP = GDP + ADP. Essential for recycling GMP and indirectly, cGMP. This is Guanylate kinase from Acinetobacter baylyi (strain ATCC 33305 / BD413 / ADP1).